We begin with the raw amino-acid sequence, 750 residues long: Methylmalonyl-CoA mutase, mitochondrial (750 aa).

A mitochondrion-targeting transit peptide spans methionine 1–leucine 32. Glutamine 50 serves as a coordination point for malonyl-CoA. Lysine 89 is subject to N6-acetyllysine. Residues tyrosine 96 to methionine 99 and threonine 106 to tyrosine 110 contribute to the malonyl-CoA site. Lysine 212 carries the post-translational modification N6-acetyllysine. Residues threonine 216–glutamine 218, arginine 228, lysine 255, histidine 265, and arginine 304–serine 306 contribute to the malonyl-CoA site. An N6-acetyllysine modification is found at lysine 335. N6-succinyllysine is present on lysine 343. Phosphoserine is present on serine 481. Residue lysine 595 is modified to N6-succinyllysine. The residue at position 602 (lysine 602) is an N6-acetyllysine. The B12-binding domain occupies arginine 614–lysine 746. Histidine 627 provides a ligand contact to adenosylcob(III)alamin.

Belongs to the methylmalonyl-CoA mutase family. Homodimer. Interacts (the apoenzyme form) with MMAA; the interaction is GTP dependent. The cofactor is adenosylcob(III)alamin.

Its subcellular location is the mitochondrion matrix. It is found in the mitochondrion. It localises to the cytoplasm. It catalyses the reaction (R)-methylmalonyl-CoA = succinyl-CoA. With respect to regulation, inhibited by itaconyl-CoA, a metabolite that inactivates the coenzyme B12 cofactor. Catalyzes the reversible isomerization of methylmalonyl-CoA (MMCoA) (generated from branched-chain amino acid metabolism and degradation of dietary odd chain fatty acids and cholesterol) to succinyl-CoA (3-carboxypropionyl-CoA), a key intermediate of the tricarboxylic acid cycle. The protein is Methylmalonyl-CoA mutase, mitochondrial (MMUT) of Pongo abelii (Sumatran orangutan).